The following is a 341-amino-acid chain: Ribose-phosphate pyrophosphokinase 5 (341 aa).

Mg(2+)-binding residues include Asp152, His154, and Asp167.

Belongs to the ribose-phosphate pyrophosphokinase family.

Its subcellular location is the cytoplasm. It carries out the reaction D-ribose 5-phosphate + ATP = 5-phospho-alpha-D-ribose 1-diphosphate + AMP + H(+). Its pathway is metabolic intermediate biosynthesis; 5-phospho-alpha-D-ribose 1-diphosphate biosynthesis; 5-phospho-alpha-D-ribose 1-diphosphate from D-ribose 5-phosphate (route I): step 1/1. In terms of biological role, 5-phosphoribose 1-diphosphate synthase involved in nucleotide, histidine, and tryptophan biosynthesis. Active in heteromultimeric complexes with other 5-phosphoribose 1-diphosphate synthases. The polypeptide is Ribose-phosphate pyrophosphokinase 5 (Schizosaccharomyces pombe (strain 972 / ATCC 24843) (Fission yeast)).